The following is a 306-amino-acid chain: UDP-3-O-acyl-N-acetylglucosamine deacetylase (306 aa).

Zn(2+) is bound by residues His79, His238, and Asp242. His265 functions as the Proton donor in the catalytic mechanism.

Belongs to the LpxC family. Requires Zn(2+) as cofactor.

The enzyme catalyses a UDP-3-O-[(3R)-3-hydroxyacyl]-N-acetyl-alpha-D-glucosamine + H2O = a UDP-3-O-[(3R)-3-hydroxyacyl]-alpha-D-glucosamine + acetate. The protein operates within glycolipid biosynthesis; lipid IV(A) biosynthesis; lipid IV(A) from (3R)-3-hydroxytetradecanoyl-[acyl-carrier-protein] and UDP-N-acetyl-alpha-D-glucosamine: step 2/6. Catalyzes the hydrolysis of UDP-3-O-myristoyl-N-acetylglucosamine to form UDP-3-O-myristoylglucosamine and acetate, the committed step in lipid A biosynthesis. In Shewanella sp. (strain W3-18-1), this protein is UDP-3-O-acyl-N-acetylglucosamine deacetylase.